The primary structure comprises 123 residues: MTSQYKINVDIILENASNAIKKFERYENRTRVPTLEGWDDNHYTNRPCVGWCNCNDEVISDGDYITTETQRLLKRVITTAILIVGINQTSSDNVGTRVINSDMCCYGNNLMLTSYINVHLVYV.

This is an uncharacterized protein from Saccharomyces cerevisiae (strain ATCC 204508 / S288c) (Baker's yeast).